Reading from the N-terminus, the 514-residue chain is ATP synthase subunit alpha (514 aa).

An ATP-binding site is contributed by 170–177 (GDRQTGKT).

Belongs to the ATPase alpha/beta chains family. F-type ATPases have 2 components, CF(1) - the catalytic core - and CF(0) - the membrane proton channel. CF(1) has five subunits: alpha(3), beta(3), gamma(1), delta(1), epsilon(1). CF(0) has three main subunits: a(1), b(2) and c(9-12). The alpha and beta chains form an alternating ring which encloses part of the gamma chain. CF(1) is attached to CF(0) by a central stalk formed by the gamma and epsilon chains, while a peripheral stalk is formed by the delta and b chains.

It is found in the cell inner membrane. It catalyses the reaction ATP + H2O + 4 H(+)(in) = ADP + phosphate + 5 H(+)(out). In terms of biological role, produces ATP from ADP in the presence of a proton gradient across the membrane. The alpha chain is a regulatory subunit. The protein is ATP synthase subunit alpha of Psychrobacter cryohalolentis (strain ATCC BAA-1226 / DSM 17306 / VKM B-2378 / K5).